A 697-amino-acid chain; its full sequence is tRNA 5-methylaminomethyl-2-thiouridine biosynthesis bifunctional protein MnmC (697 aa).

The interval 1-275 (MTAKPHKSCQ…KPATLAAIDH (275 aa)) is tRNA (mnm(5)s(2)U34)-methyltransferase. An FAD-dependent cmnm(5)s(2)U34 oxidoreductase region spans residues 280-697 (VGGGLASANL…LRKLLKGKAL (418 aa)).

This sequence in the N-terminal section; belongs to the methyltransferase superfamily. tRNA (mnm(5)s(2)U34)-methyltransferase family. In the C-terminal section; belongs to the DAO family. The cofactor is FAD.

It is found in the cytoplasm. The enzyme catalyses 5-aminomethyl-2-thiouridine(34) in tRNA + S-adenosyl-L-methionine = 5-methylaminomethyl-2-thiouridine(34) in tRNA + S-adenosyl-L-homocysteine + H(+). Functionally, catalyzes the last two steps in the biosynthesis of 5-methylaminomethyl-2-thiouridine (mnm(5)s(2)U) at the wobble position (U34) in tRNA. Catalyzes the FAD-dependent demodification of cmnm(5)s(2)U34 to nm(5)s(2)U34, followed by the transfer of a methyl group from S-adenosyl-L-methionine to nm(5)s(2)U34, to form mnm(5)s(2)U34. The chain is tRNA 5-methylaminomethyl-2-thiouridine biosynthesis bifunctional protein MnmC from Shewanella sp. (strain ANA-3).